The following is a 490-amino-acid chain: Probable cytosol aminopeptidase (490 aa).

Mn(2+) contacts are provided by Lys-257 and Asp-262. The active site involves Lys-269. 3 residues coordinate Mn(2+): Asp-281, Asp-341, and Glu-343. Residue Arg-345 is part of the active site.

Belongs to the peptidase M17 family. The cofactor is Mn(2+).

The protein resides in the cytoplasm. The catalysed reaction is Release of an N-terminal amino acid, Xaa-|-Yaa-, in which Xaa is preferably Leu, but may be other amino acids including Pro although not Arg or Lys, and Yaa may be Pro. Amino acid amides and methyl esters are also readily hydrolyzed, but rates on arylamides are exceedingly low.. The enzyme catalyses Release of an N-terminal amino acid, preferentially leucine, but not glutamic or aspartic acids.. Its function is as follows. Presumably involved in the processing and regular turnover of intracellular proteins. Catalyzes the removal of unsubstituted N-terminal amino acids from various peptides. This Prochlorococcus marinus (strain MIT 9215) protein is Probable cytosol aminopeptidase.